The chain runs to 358 residues: G-protein coupled receptor 62 (358 aa).

The Extracellular segment spans residues 1 to 17; that stretch reads MANGSGLSVTELAGSVG. The N-linked (GlcNAc...) asparagine glycan is linked to asparagine 3. The helical transmembrane segment at 18 to 38 threads the bilayer; the sequence is FILAVLVEVGAVLGNGTLLVV. The Cytoplasmic portion of the chain corresponds to 39–53; the sequence is VLRTPDLQDAFYLAH. The chain crosses the membrane as a helical span at residues 54–74; the sequence is LCVVDLLAAASIMPLGLLAAP. Residues 75–89 are Extracellular-facing; sequence PGLGTVPLDPSSCRA. A helical transmembrane segment spans residues 90–110; it reads ARFLSAALLPACTLGVAALGL. Residues 111–128 are Cytoplasmic-facing; sequence ARYRLIVHPLRPGARPAP. The helical transmembrane segment at 129–149 threads the bilayer; sequence ALVLTAVWSAAALLGALSLLG. The Extracellular portion of the chain corresponds to 150–176; that stretch reads PPPAPPPAPARCSVLAGGLGPFRPLWA. A helical membrane pass occupies residues 177 to 197; that stretch reads MLAFALPALLLLAAYGSIFLV. At 198–234 the chain is on the cytoplasmic side; the sequence is ARRAALRPPRGTRPRSDSLDSRLSFLPPLRPRLLGGK. Residues 235–255 form a helical membrane-spanning segment; the sequence is AALAPALAVGQFAACWLPYGC. Residues 256–268 are Extracellular-facing; it reads ACLAPAARAAAAE. Residues 269 to 289 traverse the membrane as a helical segment; the sequence is ATVTWVAYSAFAAHPFLYGLL. The Cytoplasmic portion of the chain corresponds to 290-358; the sequence is QRPVRLALGR…RQTPSVSEAT (69 aa). Residues 334–358 form a disordered region; it reads VLGPSEAPEQARELARQTPSVSEAT.

The protein belongs to the G-protein coupled receptor 1 family. Homodimer. Forms heterodimer with MTNR1B. Interacts with ARRB1 and ARRB2 in a spontaneous and agonist-independent manner; leading to the internalization of GPR62 in the endosomal compartment. In terms of tissue distribution, expressed in the brain and testes. Expressed widely, in the brain, including the cerebral cortex, cerebellum, hippocampus,thalamus and pituitary gland. In the testes, expressed specifically in the germ cells.

The protein localises to the cell membrane. Its subcellular location is the endosome membrane. Its function is as follows. Orphan G-protein coupled receptor. Constitutively activates the G(q/11)/inositol phosphate and the G(s)-alpha/cAMP signaling pathways. Has spontaneous activity for beta-arrestin recruitment. Shows a reciprocal regulatory interaction with the melatonin receptor MTNR1B most likely through receptor heteromerization. This Mus musculus (Mouse) protein is G-protein coupled receptor 62 (Gpr62).